Reading from the N-terminus, the 79-residue chain is Protein OPG081 (79 aa).

Residues 2-8 lie on the Intravirion side of the membrane; the sequence is VDAITVL. A helical membrane pass occupies residues 9 to 29; it reads TAICITVLMLLMVISGTAMIV. Residues 30–47 are Virion surface-facing; the sequence is KELNPNDIFTMQSLKFNR. Residues 48-68 traverse the membrane as a helical segment; the sequence is TVTIFKYIGLFIYIPGTIILY. Residues 69–79 are Intravirion-facing; the sequence is ATYVKSLLMKN.

This sequence belongs to the orthopoxvirus OPG081 family.

Its subcellular location is the virion membrane. Envelope protein. The protein is Protein OPG081 (OPG081) of Cynomys gunnisoni (Gunnison's prairie dog).